A 1247-amino-acid chain; its full sequence is Protein jagged-2 (1247 aa).

The N-terminal stretch at 1–23 (MRARGWGRLPRRLLLLLVLCVQA) is a signal peptide. The Extracellular portion of the chain corresponds to 24–1082 (TRPMGYFELQ…ETVVMGGSST (1059 aa)). Asn-153 carries N-linked (GlcNAc...) asparagine glycosylation. A DSL domain is found at 196–240 (VRCDENYYSATCNKFCRPRNDFFGHYTCDQYGNKACMDGWMGKEC). Disulfide bonds link Cys-198-Cys-207, Cys-211-Cys-223, Cys-231-Cys-240, Cys-245-Cys-256, Cys-249-Cys-262, Cys-264-Cys-273, Cys-276-Cys-287, Cys-282-Cys-293, Cys-295-Cys-304, Cys-311-Cys-323, Cys-317-Cys-333, Cys-335-Cys-344, Cys-351-Cys-362, Cys-356-Cys-371, Cys-373-Cys-382, Cys-389-Cys-400, Cys-394-Cys-409, Cys-411-Cys-420, Cys-427-Cys-438, Cys-432-Cys-447, Cys-449-Cys-458, Cys-465-Cys-475, Cys-469-Cys-484, Cys-486-Cys-495, Cys-502-Cys-513, Cys-507-Cys-522, Cys-524-Cys-533, Cys-540-Cys-551, Cys-545-Cys-560, Cys-562-Cys-571, Cys-589-Cys-612, Cys-606-Cys-622, Cys-624-Cys-633, Cys-640-Cys-651, Cys-645-Cys-660, Cys-662-Cys-671, Cys-678-Cys-689, Cys-683-Cys-698, Cys-700-Cys-709, Cys-716-Cys-727, Cys-721-Cys-736, and Cys-738-Cys-747. The EGF-like 1 domain occupies 241-274 (KEAVCKQGCNLLHGGCTVPGECRCSYGWQGKFCD). One can recognise an EGF-like 2; atypical domain in the interval 275–305 (ECVPYPGCVHGSCVEPWHCDCETNWGGLLCD). EGF-like domains are found at residues 307-345 (DLNY…KNCE) and 347-383 (AEHA…PTCA). Residues 385 to 421 (DIDECASNPCAAGGTCVDQVDGFECICPEQWVGATCQ) form the EGF-like 5; calcium-binding domain. Residues 423-459 (DANECEGKPCLNAFSCKNLIGGYYCDCLPGWKGINCQ) enclose the EGF-like 6; calcium-binding domain. Residues 461-496 (NINDCHGQCQHGGTCKDLVNGYQCVCPRGFGGRHCE) enclose the EGF-like 7; calcium-binding domain. EGF-like domains are found at residues 498-534 (EYDK…LHCE) and 536-572 (DMDL…KNCS). N-linked (GlcNAc...) asparagine glycosylation occurs at Asn-570. In terms of domain architecture, EGF-like 10; atypical spans 574-634 (PRDTCPGGAC…DSGFTGTYCH (61 aa)). Asn-619 is a glycosylation site (N-linked (GlcNAc...) asparagine). Residues 636 to 672 (NIDDCMGQPCRNGGTCIDEVDSFRCFCPSGWEGELCD) form the EGF-like 11; calcium-binding domain. Positions 674–710 (NPNDCLPDPCHSRGRCYDLVNDFYCACDDGWKGKTCH) constitute an EGF-like 12; calcium-binding domain. EGF-like domains follow at residues 712–748 (REFQ…STCT) and 751–787 (KNSS…RTCT). The N-linked (GlcNAc...) asparagine glycan is linked to Asn-752. Intrachain disulfides connect Cys-755/Cys-766, Cys-760/Cys-775, Cys-777/Cys-786, Cys-793/Cys-804, Cys-798/Cys-813, Cys-815/Cys-824, Cys-831/Cys-842, Cys-836/Cys-851, and Cys-853/Cys-862. Residues 789 to 825 (NTNDCNPLPCYNGGICVDGVNWFRCECAPGFAGPDCR) enclose the EGF-like 15; calcium-binding domain. Positions 827 to 863 (NIDECQSSPCAYGATCVDEINGYRCSCPPGRSGPRCQ) constitute an EGF-like 16; calcium-binding domain. A glycan (N-linked (GlcNAc...) asparagine) is linked at Asn-1060. The helical transmembrane segment at 1083–1103 (GLLVPVLCSVFSVLWLACVVI) threads the bilayer. Over 1104–1247 (CVWWTRKRRK…TKDVRRAGRE (144 aa)) the chain is Cytoplasmic. 3 stretches are compositionally biased toward basic and acidic residues: residues 1115–1125 (RERSRLPRDES), 1192–1212 (LSRG…KFTK), and 1230–1247 (VDNR…AGRE). Disordered regions lie at residues 1115-1148 (RERS…GSGL) and 1167-1247 (PRRA…AGRE). Ser-1125 is modified (phosphoserine).

As to expression, found to be highest in fetal thymus, epidermis, foregut dorsal root ganglia and inner ear. In 2-weeK-old mice, abundant in heart, lung, thymus, skeletal muscle, brain and testis. Expression overlaps partially with Notch1 expression.

The protein localises to the membrane. In terms of biological role, putative Notch ligand involved in the mediation of Notch signaling. Plays an essential role during limb, craniofacial and thymic development. May be involved in myogenesis and in the development of peripheral and central nervous systems. The polypeptide is Protein jagged-2 (Jag2) (Mus musculus (Mouse)).